Here is a 293-residue protein sequence, read N- to C-terminus: Diaminopimelate epimerase (293 aa).

Substrate is bound by residues asparagine 17, glutamine 47, and asparagine 67. The Proton donor role is filled by cysteine 76. Substrate contacts are provided by residues 77-78 (GN), asparagine 164, asparagine 197, and 215-216 (ER). The Proton acceptor role is filled by cysteine 224. 225 to 226 (GS) contacts substrate.

The protein belongs to the diaminopimelate epimerase family. As to quaternary structure, homodimer.

The protein localises to the cytoplasm. The catalysed reaction is (2S,6S)-2,6-diaminopimelate = meso-2,6-diaminopimelate. Its pathway is amino-acid biosynthesis; L-lysine biosynthesis via DAP pathway; DL-2,6-diaminopimelate from LL-2,6-diaminopimelate: step 1/1. Catalyzes the stereoinversion of LL-2,6-diaminopimelate (L,L-DAP) to meso-diaminopimelate (meso-DAP), a precursor of L-lysine and an essential component of the bacterial peptidoglycan. The polypeptide is Diaminopimelate epimerase (Rhodopseudomonas palustris (strain BisB5)).